The sequence spans 834 residues: DNA gyrase subunit A (834 aa).

The Topo IIA-type catalytic domain maps to 53–520 (LPDVRDGLKP…NDTEIDEEDL (468 aa)). Tyr141 functions as the O-(5'-phospho-DNA)-tyrosine intermediate in the catalytic mechanism. Positions 547 to 553 (QGRGGVG) match the GyrA-box motif.

This sequence belongs to the type II topoisomerase GyrA/ParC subunit family. Heterotetramer, composed of two GyrA and two GyrB chains. In the heterotetramer, GyrA contains the active site tyrosine that forms a transient covalent intermediate with DNA, while GyrB binds cofactors and catalyzes ATP hydrolysis.

It localises to the cytoplasm. The catalysed reaction is ATP-dependent breakage, passage and rejoining of double-stranded DNA.. A type II topoisomerase that negatively supercoils closed circular double-stranded (ds) DNA in an ATP-dependent manner to modulate DNA topology and maintain chromosomes in an underwound state. Negative supercoiling favors strand separation, and DNA replication, transcription, recombination and repair, all of which involve strand separation. Also able to catalyze the interconversion of other topological isomers of dsDNA rings, including catenanes and knotted rings. Type II topoisomerases break and join 2 DNA strands simultaneously in an ATP-dependent manner. The protein is DNA gyrase subunit A of Brachyspira hyodysenteriae (strain ATCC 49526 / WA1).